The sequence spans 233 residues: Partner of Y14 and mago (233 aa).

Positions 1 to 153 (MTTYSTDSQG…SNNSDSTVDE (153 aa)) are disordered. Residues 62 to 97 (EVVQKAKEKRERERLRQAREEQQRKEQQNKKQQAGA) adopt a coiled-coil conformation. The span at 65–90 (QKAKEKRERERLRQAREEQQRKEQQN) shows a compositional bias: basic and acidic residues. The segment covering 122-142 (KQPQQHTKSSQQKSTTAAAAA) has biased composition (low complexity). Residues 167-199 (ADAQQLEVAKKLRKLRKKIREIEAIETKLRSTD) are a coiled coil.

Belongs to the pym family. As to quaternary structure, interacts (via N-terminus) with mago and tsu/Y14; the interaction is direct.

The protein resides in the cytoplasm. Its subcellular location is the nucleus. Its function is as follows. Regulator of the exon junction complex (EJC), a multiprotein complex that associates immediately upstream of the exon-exon junction on mRNAs and serves as a positional landmarks for the intron exon structure of genes and directs post-transcriptional processes in the cytoplasm such as mRNA export, nonsense-mediated mRNA decay (NMD) or translation. The chain is Partner of Y14 and mago from Anopheles gambiae (African malaria mosquito).